A 745-amino-acid polypeptide reads, in one-letter code: Phosphoribosylformylglycinamidine synthase subunit PurL (745 aa).

The active site involves His47. The ATP site is built by Tyr50 and Lys90. Glu92 is a binding site for Mg(2+). Residues 93–96 and Arg115 contribute to the substrate site; that span reads SHNH. Catalysis depends on His94, which acts as the Proton acceptor. Asp116 contributes to the Mg(2+) binding site. Substrate is bound at residue Gln240. Mg(2+) is bound at residue Asp268. 312-314 serves as a coordination point for substrate; it reads ESQ. ATP is bound by residues Asn501 and Gly538. Asn539 is a Mg(2+) binding site. Ser541 serves as a coordination point for substrate.

Belongs to the FGAMS family. As to quaternary structure, monomer. Part of the FGAM synthase complex composed of 1 PurL, 1 PurQ and 2 PurS subunits.

It localises to the cytoplasm. The catalysed reaction is N(2)-formyl-N(1)-(5-phospho-beta-D-ribosyl)glycinamide + L-glutamine + ATP + H2O = 2-formamido-N(1)-(5-O-phospho-beta-D-ribosyl)acetamidine + L-glutamate + ADP + phosphate + H(+). It participates in purine metabolism; IMP biosynthesis via de novo pathway; 5-amino-1-(5-phospho-D-ribosyl)imidazole from N(2)-formyl-N(1)-(5-phospho-D-ribosyl)glycinamide: step 1/2. In terms of biological role, part of the phosphoribosylformylglycinamidine synthase complex involved in the purines biosynthetic pathway. Catalyzes the ATP-dependent conversion of formylglycinamide ribonucleotide (FGAR) and glutamine to yield formylglycinamidine ribonucleotide (FGAM) and glutamate. The FGAM synthase complex is composed of three subunits. PurQ produces an ammonia molecule by converting glutamine to glutamate. PurL transfers the ammonia molecule to FGAR to form FGAM in an ATP-dependent manner. PurS interacts with PurQ and PurL and is thought to assist in the transfer of the ammonia molecule from PurQ to PurL. This is Phosphoribosylformylglycinamidine synthase subunit PurL from Leptospira interrogans serogroup Icterohaemorrhagiae serovar Lai (strain 56601).